The following is a 299-amino-acid chain: tRNA-cytidine(32) 2-sulfurtransferase (299 aa).

Residues 56 to 61 (SGGKDS) carry the PP-loop motif motif. Positions 131, 134, and 222 each coordinate [4Fe-4S] cluster.

The protein belongs to the TtcA family. In terms of assembly, homodimer. Requires Mg(2+) as cofactor. The cofactor is [4Fe-4S] cluster.

It localises to the cytoplasm. The catalysed reaction is cytidine(32) in tRNA + S-sulfanyl-L-cysteinyl-[cysteine desulfurase] + AH2 + ATP = 2-thiocytidine(32) in tRNA + L-cysteinyl-[cysteine desulfurase] + A + AMP + diphosphate + H(+). The protein operates within tRNA modification. Functionally, catalyzes the ATP-dependent 2-thiolation of cytidine in position 32 of tRNA, to form 2-thiocytidine (s(2)C32). The sulfur atoms are provided by the cysteine/cysteine desulfurase (IscS) system. The protein is tRNA-cytidine(32) 2-sulfurtransferase of Xylella fastidiosa (strain M23).